Reading from the N-terminus, the 198-residue chain is Host transcription reprogramming factor 1 (198 aa).

Positions 1–19 (MQLSNFLSIWALVAMGATA) are cleaved as a signal peptide. 2 disordered regions span residues 21–59 (PMPS…SYHS) and 71–198 (ERLA…PVQL). A C2H2-type zinc finger spans residues 58-81 (HSCETCAAPFRTEERLAAHRQADH). 3 stretches are compositionally biased toward basic and acidic residues: residues 71-80 (ERLAAHRQAD), 104-128 (TSER…RSQE), and 167-177 (KLDKPTRKEQY).

It localises to the secreted. Its subcellular location is the host nucleus. Secreted effector that translocates into the nuclei of host cells to reprogram the expression of immunity-associated genes by binding to effector binding elements (EBEs) in rice. Binds the 5'-CAATCTTC-3' EBE of promoters from targeted rice genes and probably recruits a yet to be determined host repressor. Causes ambivalent immunity with increased susceptibility to the hemibiotrophic pathogens Magnaporthe oryzae and Xanthomonas oryzae pv. oryzae, but enhances resistance to Cochliobolus miyabeanus, a necrotrophic pathogen. The protein is Host transcription reprogramming factor 1 of Pyricularia oryzae (strain 70-15 / ATCC MYA-4617 / FGSC 8958) (Rice blast fungus).